We begin with the raw amino-acid sequence, 969 residues long: Probable Rho-type GTPase-activating protein 3 (969 aa).

LIM zinc-binding domains follow at residues 17–81 and 76–135; these read TVCF…CTAC and HTCT…RHPS. 3 disordered regions span residues 170–223, 348–459, and 613–646; these read IEIM…ADSL, ATSP…VEEL, and TSSK…SPNL. Residues 193–202 are compositionally biased toward polar residues; that stretch reads ETPTNMSQAE. Composition is skewed to low complexity over residues 212-223 and 350-361; these read DSNLASNSADSL and SPFRPFSPSYRS. Polar residues-rich tracts occupy residues 369–392 and 418–432; these read TRSP…SFAQ and LSET…SLGS. The span at 450–459 shows a compositional bias: basic and acidic residues; sequence SERDSDVEEL. Residues 613 to 623 are compositionally biased toward low complexity; that stretch reads TSSKNTTSSIN. Over residues 624–637 the composition is skewed to polar residues; that stretch reads PLTAVSSNSGQSSG. The Phorbol-ester/DAG-type zinc finger occupies 697 to 744; that stretch reads DHVFHVNAIFKPSRCYICSESVWGSELRCFHCSISCHSRCLKRLFAES. The Rho-GAP domain occupies 780-966; that stretch reads RSLENQLKIE…FMLDNVDKIL (187 aa).

In terms of assembly, interacts with dil1.

Its subcellular location is the cell tip. In terms of biological role, GTPase-activating protein for Rho-type proteins. The protein is Probable Rho-type GTPase-activating protein 3 (rga3) of Schizosaccharomyces pombe (strain 972 / ATCC 24843) (Fission yeast).